A 370-amino-acid polypeptide reads, in one-letter code: Leucine-rich repeat and transmembrane domain-containing protein 2 (370 aa).

Positions 1 to 35 (MLAPGSSPGQRGRLALQWRQVSWITCWIALYAVEA) are cleaved as a signal peptide. One can recognise an LRRNT domain in the interval 36 to 68 (LPTCPFSCKCDSRSLEVDCSGLGLTTVPPDVPA). Topologically, residues 36–310 (LPTCPFSCKC…PASVRRAMGT (275 aa)) are extracellular. LRR repeat units lie at residues 69–90 (ATRT…AFAN), 93–114 (SLQR…IFGD), 117–139 (NLTE…LRHS), 141–162 (LLRH…LFDG), and 165–186 (ALRS…TFEP). Residue Asn-90 is glycosylated (N-linked (GlcNAc...) asparagine). 2 N-linked (GlcNAc...) asparagine glycosylation sites follow: Asn-117 and Asn-125. The 55-residue stretch at 198-252 (NPWECDCNLREFKHWMEWFSYRGGRLDQLACTLPKELRGKDMRMVPMEMFNYCSQ) folds into the LRRCT domain. The N-linked (GlcNAc...) asparagine glycan is linked to Asn-257. Positions 261–300 (GLDIPGPPCTKASPEPAKPKPGAEPEPEPSTACPQKQRHR) are disordered. The chain crosses the membrane as a helical span at residues 311–331 (VIIAGVVCGVVCIMMVVAAAY). Residues 332–370 (GCIYASLMAKYHRELKKRQPLMGDPEGEHEDQKQISSVA) are Cytoplasmic-facing. The tract at residues 351-370 (PLMGDPEGEHEDQKQISSVA) is disordered.

It is found in the membrane. This chain is Leucine-rich repeat and transmembrane domain-containing protein 2 (LRTM2), found in Homo sapiens (Human).